Reading from the N-terminus, the 7192-residue chain is Nonribosomal peptide synthetase gloA (7192 aa).

The segment covering 1 to 48 (MTPSRSLENGEKQMNWNESPQTASPKNVLRDSNSNGNYVNGHGTNING) has biased composition (polar residues). Positions 1–52 (MTPSRSLENGEKQMNWNESPQTASPKNVLRDSNSNGNYVNGHGTNINGDGSD) are disordered. The region spanning 105-181 (HSTSKFKEEF…GLFATANFRP (77 aa)) is the Carrier 1 domain. S142 carries the O-(pantetheine 4'-phosphoryl)serine modification. The interval 239-634 (EDVYPCTPLQ…TYTVQCLCNP (396 aa)) is condensation 1. The adenylation 1 stretch occupies residues 675–1047 (QDQVNIQPAK…SLMYLGRCDS (373 aa)). The 77-residue stretch at 1190–1266 (APSTDAEKQV…DLAFVIQRRL (77 aa)) folds into the Carrier 2 domain. S1227 is subject to O-(pantetheine 4'-phosphoryl)serine. The segment at 1316-1736 (EDIYPCTPLQ…MSWLSDYDEE (421 aa)) is condensation 2. The adenylation 2 stretch occupies residues 1758-2154 (QEQTKLRPNA…GRRDTQIKIR (397 aa)). The Carrier 3 domain occupies 2288–2364 (APSTREECLV…ELAELLAKRS (77 aa)). At S2325 the chain carries O-(pantetheine 4'-phosphoryl)serine. A condensation 3 region spans residues 2407–2829 (VEDVYPCTPL…LIAPEDQEQI (423 aa)). The adenylation 3 stretch occupies residues 2849–3245 (YKQVMARPQA…GRRDDQIKIR (397 aa)). The region spanning 3378–3455 (TPSTKMEKVI…DLASVMTEHR (78 aa)) is the Carrier 4 domain. An O-(pantetheine 4'-phosphoryl)serine modification is found at S3415. The tract at residues 3502 to 3891 (EDIYPCTALQ…NGVLDQFVYI (390 aa)) is condensation 4. The adenylation 4 stretch occupies residues 3920–4320 (QEQALARPTA…ARRDMQVKIR (401 aa)). The 77-residue stretch at 4453-4529 (LPSTQVELQL…ELAVILDGRK (77 aa)) folds into the Carrier 5 domain. An O-(pantetheine 4'-phosphoryl)serine modification is found at S4490. Residues 4574 to 4971 (EDIYPCTPLQ…QFEYVVQKFH (398 aa)) form a condensation 5 region. Positions 5013-5414 (DDHVAARPMA…GRQDLQVKIR (402 aa)) are adenylation 5. Positions 5551 to 5627 (APDTDLGRLI…DLVNTLSNRS (77 aa)) constitute a Carrier 6 domain. The residue at position 5588 (S5588) is an O-(pantetheine 4'-phosphoryl)serine. The condensation 6 stretch occupies residues 5674 to 6071 (EDVYPSTPLQ…CVVQRILTQS (398 aa)). The segment at 6111–6507 (QAQVKKSPAA…GRRDLQVKIR (397 aa)) is adenylation 6. A Carrier 7 domain is found at 6645-6721 (NPSTTMERQL…DLAVVLTDRL (77 aa)). S6682 is subject to O-(pantetheine 4'-phosphoryl)serine. The condensation 7 stretch occupies residues 6795-7178 (NGPCDTRALK…NPLSPVKQVL (384 aa)).

This sequence belongs to the NRP synthetase family.

It functions in the pathway mycotoxin biosynthesis. In terms of biological role, nonribosomal peptide synthetase; part of the gene cluster that mediates the biosynthesis of pneumocandins, lipohexapeptides of the echinocandin family that prevent fungal cell wall formation by non-competitive inhibition of beta-1,3-glucan synthase. The 10,12-dimethylmyristoyl side chain is synthesized by the reducing polyketide synthase gloL/GLPKS4. The thioesterase gloN/GLHYD exclusively interacts with gloL/GLPKS4 to maintain turnover of the polyketide side chain. The 10R,12S-dimethylmyristic acid is then transferred to the first thiolation domain of the nonribosomal peptide synthetase gloA/GLNRPS4 by the acyl-AMP ligase gloD/GLligase, followed by its acylation to L-ornithine to trigger elongation of the cyclic hexapeptide. L-ornithine, 4R-hydroxyl-L-proline (generated from L-proline by the dioxygenase gloF/GLOXY2), 3S-hydroxyl-L-homotyrosine (generated by gloG/GLHtyB, gloH/GLHtyA, gloI/GLHtyC, gloJ/GLHtyD and hydroxylated at C-3 by the dioxygenase gloM/GLOXY1), 3R-hydroxyl-L-glutamine (generated from L-glutamine probably by the dioxygenase gloE/GLOXY3) and 3S-hydroxyl-L-proline (generated from L-proline by the dioxygenase gloF/GLOXY2 to yield pneumocandin B0), or 3S-hydroxyl-4S-methyl-L-proline (generated from L-leucine by the dioxygenase gloC/GLOXY4 to yield pneumocandin A0) are sequentially added to the growing chain. The last C domain of gloA/GLNRPS4 is proposed to be responsible for cyclization by condensation to form the peptide bond between L-ornithine and 3S-hydroxyl-4S-methyl-L-proline (for pneumocandin A0) or 3S-hydroxyl-L-proline (for pneumocandin B0). Finally, the subsequent C-4 hydroxylation of 3S-hydroxyl-L-homotyrosine and L-ornithine dihydroxylation at C-4 and C-5 are performed by the cytochrome P450 monooxygenases gloP/GLP450-1 and gloO/GLP450-2, respectively. In Glarea lozoyensis (strain ATCC 20868 / MF5171), this protein is Nonribosomal peptide synthetase gloA.